The chain runs to 257 residues: Putative hydro-lyase BceJ2315_40370 (257 aa).

Belongs to the D-glutamate cyclase family.

This Burkholderia cenocepacia (strain ATCC BAA-245 / DSM 16553 / LMG 16656 / NCTC 13227 / J2315 / CF5610) (Burkholderia cepacia (strain J2315)) protein is Putative hydro-lyase BceJ2315_40370.